The sequence spans 306 residues: N-acetylmuramic acid 6-phosphate etherase (306 aa).

The 164-residue stretch at 59-222 (TSQALAKGGR…STGTMVMLGK (164 aa)) folds into the SIS domain. Glutamate 87 (proton donor) is an active-site residue. Glutamate 118 is a catalytic residue.

The protein belongs to the GCKR-like family. MurNAc-6-P etherase subfamily. As to quaternary structure, homodimer.

It carries out the reaction N-acetyl-D-muramate 6-phosphate + H2O = N-acetyl-D-glucosamine 6-phosphate + (R)-lactate. Its pathway is amino-sugar metabolism; N-acetylmuramate degradation. Specifically catalyzes the cleavage of the D-lactyl ether substituent of MurNAc 6-phosphate, producing GlcNAc 6-phosphate and D-lactate. The protein is N-acetylmuramic acid 6-phosphate etherase of Microcystis aeruginosa (strain NIES-843 / IAM M-2473).